Consider the following 282-residue polypeptide: Parvulin-like PPIase (282 aa).

Positions 1 to 20 are cleaved as a signal peptide; the sequence is MKKLSVIFLSVSMLSGIAFA. Residues 138–231 form the PpiC domain; sequence KEQIKVAHIL…FGWHIIKVLE (94 aa).

The protein belongs to the PpiC/parvulin rotamase family.

The protein localises to the cell outer membrane. The enzyme catalyses [protein]-peptidylproline (omega=180) = [protein]-peptidylproline (omega=0). This chain is Parvulin-like PPIase (plp), found in Rickettsia conorii (strain ATCC VR-613 / Malish 7).